We begin with the raw amino-acid sequence, 576 residues long: Zinc finger protein 791 (576 aa).

In terms of domain architecture, KRAB spans 4–90 (VAFEDVSVSF…AENFSPNLSV (87 aa)). 17 consecutive C2H2-type zinc fingers follow at residues 100–122 (YECT…MRSH), 132–154 (YKCK…ERSH), 160–182 (YKCK…ERTH), 188–210 (YECK…ERIH), 216–238 (YECK…ERTH), 244–266 (YACK…MITH), 272–294 (YKCK…ERIH), 300–322 (YKCK…ERIH), 328–350 (YKCK…VRVH), 356–378 (YKCK…ERTH), 384–406 (YECK…KRNH), 412–434 (YECK…MITH), 440–462 (YKCR…ERTH), 468–490 (YECK…KRTH), 496–518 (YECK…MRMH), 524–546 (YKCK…TRIH), and 552–574 (LECK…MRMH).

The protein belongs to the krueppel C2H2-type zinc-finger protein family.

Its subcellular location is the nucleus. In terms of biological role, may be involved in transcriptional regulation. This chain is Zinc finger protein 791 (ZNF791), found in Homo sapiens (Human).